The sequence spans 297 residues: Phosphoribosylaminoimidazole-succinocarboxamide synthase (297 aa).

Belongs to the SAICAR synthetase family.

The catalysed reaction is 5-amino-1-(5-phospho-D-ribosyl)imidazole-4-carboxylate + L-aspartate + ATP = (2S)-2-[5-amino-1-(5-phospho-beta-D-ribosyl)imidazole-4-carboxamido]succinate + ADP + phosphate + 2 H(+). It participates in purine metabolism; IMP biosynthesis via de novo pathway; 5-amino-1-(5-phospho-D-ribosyl)imidazole-4-carboxamide from 5-amino-1-(5-phospho-D-ribosyl)imidazole-4-carboxylate: step 1/2. The protein is Phosphoribosylaminoimidazole-succinocarboxamide synthase of Mycobacterium ulcerans (strain Agy99).